Here is a 158-residue protein sequence, read N- to C-terminus: Interleukin-17A (158 aa).

Positions 1-25 (MSPGRASSVSLMLLLLLSLAATVKA) are cleaved as a signal peptide. Asparagine 71 is a glycosylation site (N-linked (GlcNAc...) asparagine). 2 disulfides stabilise this stretch: cysteine 97-cysteine 147 and cysteine 102-cysteine 149.

This sequence belongs to the IL-17 family. In terms of assembly, homodimer. Forms complexes with IL17RA and IL17RC receptors with 2:1 binding stoichiometry: two receptor chains for one interleukin molecule. IL17A homodimer preferentially drives the formation of IL17RA-IL17RC heterodimeric receptor complex. IL17A homodimer adopts an asymmetrical ternary structure with one IL17RA molecule, allowing for high affinity interactions of one IL17A monomer with one IL17RA molecule (via D1 and D2 domains), while disfavoring binding of a second IL17RA molecule on the other IL17A monomer. Heterodimer with IL17F. IL17A-IL17F forms complexes with IL17RA-IL17RC, but with lower affinity when compared to IL17A homodimer. IL17RA and IL17RC chains cannot distinguish between IL17A and IL17F molecules, potentially enabling the formation of topologically distinct complexes. In terms of tissue distribution, expressed by Th17 cell lineage (at protein level). The expression pattern reflects the differentiation state, with IL17A-IL17F heterodimers produced at higher levels than IL17A-IL17A and IL17F-IL17F dimers in fully differentiated Th17 cells. Expressed in innate lymphoid cells (at protein level). Expressed in gamma-delta T cell subsets (at protein level). Expressed in iNKT cells (at protein level).

It localises to the secreted. Functionally, effector cytokine of innate and adaptive immune system involved in antimicrobial host defense and maintenance of tissue integrity. Signals via IL17RA-IL17RC heterodimeric receptor complex, triggering homotypic interaction of IL17RA and IL17RC chains with TRAF3IP2 adapter. This leads to downstream TRAF6-mediated activation of NF-kappa-B and MAPkinase pathways ultimately resulting in transcriptional activation of cytokines, chemokines, antimicrobial peptides and matrix metalloproteinases, with potential strong immune inflammation. Plays an important role in connecting T cell-mediated adaptive immunity and acute inflammatory response to destroy extracellular bacteria and fungi. As a signature effector cytokine of T-helper 17 cells (Th17), primarily induces neutrophil activation and recruitment at infection and inflammatory sites. In airway epithelium, mediates neutrophil chemotaxis via induction of CXCL1 and CXCL5 chemokines. In secondary lymphoid organs, contributes to germinal center formation by regulating the chemotactic response of B cells to CXCL12 and CXCL13, enhancing retention of B cells within the germinal centers, B cell somatic hypermutation rate and selection toward plasma cells. Effector cytokine of a subset of gamma-delta T cells that functions as part of an inflammatory circuit downstream IL1B, TLR2 and IL23A-IL12B to promote neutrophil recruitment for efficient bacterial clearance. Effector cytokine of innate immune cells including invariant natural killer cell (iNKT) and group 3 innate lymphoid cells that mediate initial neutrophilic inflammation. Involved in the maintenance of the integrity of epithelial barriers during homeostasis and pathogen infection. Upon acute injury, has a direct role in epithelial barrier formation by regulating OCLN localization and tight junction biogenesis. As part of the mucosal immune response induced by commensal bacteria, enhances host's ability to resist pathogenic bacterial and fungal infections by promoting neutrophil recruitment and antimicrobial peptides release. In synergy with IL17F, mediates the production of antimicrobial beta-defensins DEFB1, DEFB103A, and DEFB104A by mucosal epithelial cells, limiting the entry of microbes through the epithelial barriers. Involved in antiviral host defense through various mechanisms. Enhances immunity against West Nile virus by promoting T cell cytotoxicity. May play a beneficial role in influenza A virus (H5N1) infection by enhancing B cell recruitment and immune response in the lung. Contributes to influenza A virus (H1N1) clearance by driving the differentiation of B-1a B cells, providing for production of virus-specific IgM antibodies at first line of host defense. The polypeptide is Interleukin-17A (Il17a) (Mus musculus (Mouse)).